Here is a 134-residue protein sequence, read N- to C-terminus: Protein Turandot E (134 aa).

Residues 1–38 form the signal peptide; the sequence is MSNTRTVHSSTSISKMNSALQISCLLVVLGCLLGSGHC.

This sequence belongs to the Turandot family.

The protein resides in the secreted. Its function is as follows. A humoral factor that may play a role in stress tolerance. This chain is Protein Turandot E, found in Drosophila melanogaster (Fruit fly).